We begin with the raw amino-acid sequence, 163 residues long: Nucleotide-binding protein MS1759 (163 aa).

Belongs to the YajQ family.

Functionally, nucleotide-binding protein. This chain is Nucleotide-binding protein MS1759, found in Mannheimia succiniciproducens (strain KCTC 0769BP / MBEL55E).